The chain runs to 314 residues: Melanoma-associated antigen 2 (314 aa).

Positions 1 to 20 (MPLEQRSQHCKPEEGLEARG) are enriched in basic and acidic residues. Positions 1–69 (MPLEQRSQHC…SPPHSPQGAS (69 aa)) are disordered. Residues 21–44 (EALGLVGAQAPATEEQQTASSSST) are compositionally biased toward low complexity. The residue at position 64 (Ser-64) is a Phosphoserine. Positions 109–308 (ISRKMVELVH…ISYPPLHERA (200 aa)) constitute an MAGE domain.

Interacts with TRIM28 and UBE2H. Interacts with HDAC3. Interacts with PML (isoform PML-1, isoform PML-2, isoform PML-3, isoform PML-4 and isoform PML-5). In terms of tissue distribution, expressed in many tumors of several types, such as melanoma, head and neck squamous cell carcinoma, lung carcinoma and breast carcinoma, but not in normal tissues except for testes.

It is found in the nucleus. The protein resides in the PML body. Reduces p53/TP53 transactivation function through recruitment of HDAC3 to p53/TP53 transcription sites. Also represses p73/TP73 activity. Proposed to enhance ubiquitin ligase activity of RING-type zinc finger-containing E3 ubiquitin-protein ligases. In vitro enhances ubiquitin ligase activity of TRIM28 and stimulates p53/TP53 ubiquitination by TRIM28 potentially in presence of Ubl-conjugating enzyme UBE2H. Proposed to act through recruitment and/or stabilization of the Ubl-conjugating enzyme (E2) at the E3:substrate complex. May play a role in embryonal development and tumor transformation or aspects of tumor progression. In vitro promotes cell viability in melanoma cell lines. Antigen recognized on a melanoma by autologous cytolytic T-lymphocytes. Negatively regulates acetylation and sumoylation of PML and represses PML-induced p53/TP53 acetylation and activation. This is Melanoma-associated antigen 2 (MAGEA2) from Homo sapiens (Human).